Consider the following 165-residue polypeptide: Phosphopantetheine adenylyltransferase (165 aa).

The protein belongs to the eukaryotic CoaD family.

Its subcellular location is the cytoplasm. The catalysed reaction is (R)-4'-phosphopantetheine + ATP + H(+) = 3'-dephospho-CoA + diphosphate. Its pathway is cofactor biosynthesis; coenzyme A biosynthesis. Functionally, reversibly transfers an adenylyl group from ATP to 4'-phosphopantetheine, yielding dephospho-CoA (dPCoA) and pyrophosphate. In Thermococcus kodakarensis (strain ATCC BAA-918 / JCM 12380 / KOD1) (Pyrococcus kodakaraensis (strain KOD1)), this protein is Phosphopantetheine adenylyltransferase.